The chain runs to 188 residues: Elongation factor P (188 aa).

An N6-(3,6-diaminohexanoyl)-5-hydroxylysine modification is found at Lys34.

Belongs to the elongation factor P family. Post-translationally, may be beta-lysylated on the epsilon-amino group of Lys-34 by the combined action of EpmA and EpmB, and then hydroxylated on the C5 position of the same residue by EpmC (if this protein is present). Lysylation is critical for the stimulatory effect of EF-P on peptide-bond formation. The lysylation moiety may extend toward the peptidyltransferase center and stabilize the terminal 3-CCA end of the tRNA. Hydroxylation of the C5 position on Lys-34 may allow additional potential stabilizing hydrogen-bond interactions with the P-tRNA.

The protein localises to the cytoplasm. It participates in protein biosynthesis; polypeptide chain elongation. In terms of biological role, involved in peptide bond synthesis. Alleviates ribosome stalling that occurs when 3 or more consecutive Pro residues or the sequence PPG is present in a protein, possibly by augmenting the peptidyl transferase activity of the ribosome. Modification of Lys-34 is required for alleviation. This chain is Elongation factor P, found in Xanthomonas axonopodis pv. citri (strain 306).